The following is a 52-amino-acid chain: Insulin-2 (52 aa).

Cystine bridges form between C7/C38, C19/C51, and C37/C42.

Belongs to the insulin family. Heterodimer of a B chain and an A chain linked by two disulfide bonds.

The protein resides in the secreted. Functionally, insulin decreases blood glucose concentration. It increases cell permeability to monosaccharides, amino acids and fatty acids. It accelerates glycolysis, the pentose phosphate cycle, and glycogen synthesis in liver. This chain is Insulin-2, found in Huso dauricus (Kaluga sturgeon).